We begin with the raw amino-acid sequence, 227 residues long: MMLHIPGVLTNAQVAQCRELLDAADWVDGNATSGAQSALAKRNRQLPEGSPVARAVGDAIQDALARHALFFSAALPLKVFPPLFNRYAGGETFGTHVDNAIRLLRGTDFRVRSDLSATLFLAEPDAYDGGELCVEDTYGVHRAKLPAGDLVLYPASSLHHVTPVTRGERVASFFWIQSMVRDDGDRTLLFQLDTQIQALSAEKGAKDPMVISLTGIYHNLLRKWADA.

A Fe2OG dioxygenase domain is found at 78-178 (KVFPPLFNRY…RVASFFWIQS (101 aa)). Fe cation-binding residues include histidine 96, aspartate 98, and histidine 159. 2-oxoglutarate is bound at residue arginine 169.

It depends on Fe(2+) as a cofactor. L-ascorbate is required as a cofactor.

This Burkholderia ambifaria (strain MC40-6) protein is PKHD-type hydroxylase BamMC406_4714.